The primary structure comprises 211 residues: tRNA (guanine-N(7)-)-methyltransferase (211 aa).

Residues Asp40, Glu65, Asn92, and Asp117 each contribute to the S-adenosyl-L-methionine site. Asp117 is an active-site residue. Residue Lys121 participates in substrate binding. Positions 123 to 128 (RHNKRR) are interaction with RNA. Asp153 lines the substrate pocket.

Belongs to the class I-like SAM-binding methyltransferase superfamily. TrmB family.

It catalyses the reaction guanosine(46) in tRNA + S-adenosyl-L-methionine = N(7)-methylguanosine(46) in tRNA + S-adenosyl-L-homocysteine. Its pathway is tRNA modification; N(7)-methylguanine-tRNA biosynthesis. In terms of biological role, catalyzes the formation of N(7)-methylguanine at position 46 (m7G46) in tRNA. This chain is tRNA (guanine-N(7)-)-methyltransferase, found in Synechocystis sp. (strain ATCC 27184 / PCC 6803 / Kazusa).